Consider the following 22-residue polypeptide: Protein YncP (22 aa).

The chain is Protein YncP from Escherichia coli (strain K12).